The following is a 308-amino-acid chain: Eukaryotic translation initiation factor 3 subunit G-B (308 aa).

Disordered stretches follow at residues 1 to 35 (MPTG…KQDP) and 176 to 227 (STAD…DDNA). Residues 185-194 (GAEPEPAQAP) are compositionally biased toward low complexity. Basic and acidic residues predominate over residues 209-227 (GGSRRGESMQPNRRADDNA). The 79-residue stretch at 227–305 (ATIRVTNLSE…LILNVEWAKP (79 aa)) folds into the RRM domain.

The protein belongs to the eIF-3 subunit G family. In terms of assembly, component of the eukaryotic translation initiation factor 3 (eIF-3) complex, which is composed of 13 subunits: eif3a, eif3b, eif3c, eif3d, eif3e, eif3f, eif3g, eif3h, eif3i, eif3j, eif3k, eif3l and eif3m.

It localises to the cytoplasm. Functionally, RNA-binding component of the eukaryotic translation initiation factor 3 (eIF-3) complex, which is involved in protein synthesis of a specialized repertoire of mRNAs and, together with other initiation factors, stimulates binding of mRNA and methionyl-tRNAi to the 40S ribosome. The eIF-3 complex specifically targets and initiates translation of a subset of mRNAs involved in cell proliferation. This subunit can bind 18S rRNA. This chain is Eukaryotic translation initiation factor 3 subunit G-B (eif3g-b), found in Xenopus laevis (African clawed frog).